Consider the following 267-residue polypeptide: Methylglyoxal reductase DkgB (267 aa).

The active-site Proton donor is Y39. H97 contributes to the substrate binding site. 179–231 (MTLAYGKALKDEVIARIAAKHNATPAQVILAWAMGEGYSVIPSSTKRENLESN) contributes to the NADP(+) binding site.

This sequence belongs to the aldo/keto reductase family. In terms of assembly, monomer.

Its subcellular location is the cytoplasm. The catalysed reaction is hydroxyacetone + NADP(+) = methylglyoxal + NADPH + H(+). Functionally, aldo-keto reductase that significantly contributes to cellular methylglyoxal detoxification by catalyzing the NADPH-dependent conversion of methylglyoxal to acetol. The sequence is that of Methylglyoxal reductase DkgB from Escherichia coli O157:H7.